A 569-amino-acid polypeptide reads, in one-letter code: MIMLKYNNKLLSDNERIKKNSNFLRGTIEKDLDNNLTGGFNVDNAQLIRFHGMYQQDDRDVRLERMNQKLEPLINMMLRCRLPGGVITSQQWLNIDNFSEEQTLYSSIRLTTRQTFQLHGILKPKLKGIHQLLNKLGLDSIATAGDVNRNVICTANPMESKVHYQIWELSKKISEHLLPKSKAYAEIWLNEKKIESIDSEPILSSVYLPRKFKIAIAVPPVNDVDVYANDLGLVAIKDNTGNLIGFNVLIGGGLAMTYGDKSTYPRMASEFGYINLQDILKIVESVITVQRDWGDRYNRRHAKTKYTLVKVGIDILKKEIENRSGLKFSPMYPYKFTERGDKFGWIRGINQDYWHLTLFIENGRVCNTSNILIKKGLSEIAKVHSGFFRITTNQNLIISEIHQDKKDIIEDLLKQYGLLGDFVTSQRKSSMACVAFPTCPLAMAEAERFLPAFVTKVEHVMSKYNLQRDAIILRVTGCPNGCARAMLAEIGLTGRGIGRYNLYLGGNKNGTRIPRLYKENITEDEILHVLDITIGDWAKNRKTQESYGDYVVRAGIVRAVINSEEDFYL.

Residues C433, C439, C478, and C482 each contribute to the [4Fe-4S] cluster site. C482 is a binding site for siroheme.

The protein belongs to the nitrite and sulfite reductase 4Fe-4S domain family. Alpha(8)-beta(8). The alpha component is a flavoprotein, the beta component is a hemoprotein. Siroheme serves as cofactor. It depends on [4Fe-4S] cluster as a cofactor.

The catalysed reaction is hydrogen sulfide + 3 NADP(+) + 3 H2O = sulfite + 3 NADPH + 4 H(+). Its pathway is sulfur metabolism; hydrogen sulfide biosynthesis; hydrogen sulfide from sulfite (NADPH route): step 1/1. Component of the sulfite reductase complex that catalyzes the 6-electron reduction of sulfite to sulfide. This is one of several activities required for the biosynthesis of L-cysteine from sulfate. This chain is Sulfite reductase [NADPH] hemoprotein beta-component, found in Blochmanniella floridana.